Consider the following 372-residue polypeptide: Glutamate 5-kinase (372 aa).

K14 is a binding site for ATP. Substrate is bound by residues S54, D141, and N153. Position 173-174 (173-174 (TD)) interacts with ATP. A PUA domain is found at 280–358 (RGRVIIDAGA…SEIESVLGHL (79 aa)).

Belongs to the glutamate 5-kinase family.

Its subcellular location is the cytoplasm. The enzyme catalyses L-glutamate + ATP = L-glutamyl 5-phosphate + ADP. It participates in amino-acid biosynthesis; L-proline biosynthesis; L-glutamate 5-semialdehyde from L-glutamate: step 1/2. In terms of biological role, catalyzes the transfer of a phosphate group to glutamate to form L-glutamate 5-phosphate. This chain is Glutamate 5-kinase, found in Cupriavidus metallidurans (strain ATCC 43123 / DSM 2839 / NBRC 102507 / CH34) (Ralstonia metallidurans).